A 258-amino-acid chain; its full sequence is Isoprenyl transferase (258 aa).

The active site involves Asp38. Residue Asp38 participates in Mg(2+) binding. Substrate is bound by residues 39–42, Trp43, Arg51, His55, and 83–85; these read GNGR and STE. Asn86 serves as the catalytic Proton acceptor. Substrate contacts are provided by residues Trp87, Arg89, Arg206, and 212–214; that span reads RIS. Glu225 serves as a coordination point for Mg(2+).

The protein belongs to the UPP synthase family. Homodimer. Mg(2+) is required as a cofactor.

Its function is as follows. Catalyzes the condensation of isopentenyl diphosphate (IPP) with allylic pyrophosphates generating different type of terpenoids. The sequence is that of Isoprenyl transferase from Bacillus cereus (strain ATCC 14579 / DSM 31 / CCUG 7414 / JCM 2152 / NBRC 15305 / NCIMB 9373 / NCTC 2599 / NRRL B-3711).